The following is a 422-amino-acid chain: Beclin-1-like protein (422 aa).

The stretch at 119–243 (MLEIMDRELR…KQQLDKLRDT (125 aa)) forms a coiled coil. The tract at residues 182-201 (QSLNDAIAEEEQEREELHEQ) is disordered.

It belongs to the beclin family. As to quaternary structure, interacts with Rab18, preferentially binding to the GTP-bound form.

In terms of biological role, plays a central role in autophagy. The sequence is that of Beclin-1-like protein from Drosophila melanogaster (Fruit fly).